We begin with the raw amino-acid sequence, 115 residues long: Glutaredoxin-like protein C5orf63 homolog (115 aa).

Cysteine 40 and cysteine 43 are disulfide-bonded.

The protein belongs to the glutaredoxin family. YDR286C subfamily.

The chain is Glutaredoxin-like protein C5orf63 homolog from Mus musculus (Mouse).